The sequence spans 148 residues: Snaclec 6 (148 aa).

An N-terminal signal peptide occupies residues Met1 to Ala23. 3 cysteine pairs are disulfide-bonded: Cys27–Cys38, Cys55–Cys144, and Cys121–Cys136. The C-type lectin domain maps to Tyr34–Lys145. Asn130 carries N-linked (GlcNAc...) asparagine glycosylation.

The protein belongs to the snaclec family. As to quaternary structure, heterodimer; disulfide-linked. As to expression, expressed by the venom gland.

The protein resides in the secreted. Functionally, interferes with one step of hemostasis (modulation of platelet aggregation, or coagulation cascade, for example). This Bitis arietans (African puff adder) protein is Snaclec 6.